The primary structure comprises 141 residues: HTH-type transcriptional repressor NsrR (141 aa).

The HTH rrf2-type domain occupies 2–129 (QLTSFTDYGL…DNYTLADLVE (128 aa)). Positions 28–51 (ISEVTDVYGVSRNHMVKIINQLSR) form a DNA-binding region, H-T-H motif. [2Fe-2S] cluster is bound by residues Cys-91, Cys-96, and Cys-102.

The cofactor is [2Fe-2S] cluster.

Functionally, nitric oxide-sensitive repressor of genes involved in protecting the cell against nitrosative stress. May require iron for activity. This Escherichia fergusonii (strain ATCC 35469 / DSM 13698 / CCUG 18766 / IAM 14443 / JCM 21226 / LMG 7866 / NBRC 102419 / NCTC 12128 / CDC 0568-73) protein is HTH-type transcriptional repressor NsrR.